The primary structure comprises 340 residues: Organic solute transporter subunit alpha (340 aa).

At 1–48 (MEPGRTHIKLDPRYTAELLELLETNYSISPACFSHPPTAAQLLRALGP) the chain is on the extracellular side. Asparagine 25 carries an N-linked (GlcNAc...) asparagine glycan. A helical membrane pass occupies residues 49 to 69 (VDIALTIILTFLTTGSVAIFL). At 70 to 87 (EDAVYLYKNTLCPIKKRT) the chain is on the cytoplasmic side. The chain crosses the membrane as a helical span at residues 88–108 (LIWSSSAPTVVSVFCCFGLWI). Residues 109–114 (PRALTL) lie on the Extracellular side of the membrane. Residues 115–135 (VEMAITSFYAVCFYLLMMVMV) traverse the membrane as a helical segment. Residues 136–181 (EGFGGKKAVLRTLKDTPMRVHTGPCCCCCPCCPPLILTRKKLQLLL) lie on the Cytoplasmic side of the membrane. The chain crosses the membrane as a helical span at residues 182 to 202 (LGPFQYAFFKITLSIVGLFLI). Topologically, residues 203 to 219 (PDGIYDPGEISEKSAAL) are extracellular. The chain crosses the membrane as a helical span at residues 220 to 240 (WINNLLAVSTLLALWSLAILF). The Cytoplasmic segment spans residues 241–255 (RQAKMHLGEQNMGSK). A helical membrane pass occupies residues 256 to 276 (FALFQVLVILTALQPAIFSIL). The Extracellular portion of the chain corresponds to 277-297 (ANSGQIACSPPYSSKIRSQVM). The helical transmembrane segment at 298-317 (NCHMLILETFLMTVLTRMYY) threads the bilayer. Over 318-340 (RRKDDKVGYEACSLPDLDSALKA) the chain is Cytoplasmic. Serine 330 bears the Phosphoserine mark.

The protein belongs to the OST-alpha family. As to quaternary structure, interacts with SLC51B. The Ost-alpha/Ost-beta complex is a heterodimer composed of alpha (SLC51A) and beta (SLC51B) subunit. Post-translationally, N-glycosylated. Present at high levels in ileum. In ileum, it is restricted to the apical domain on the mature villus enterocytes with little detectable expression in the goblet cells or crypt enterocytes (at protein level). Expressed in kidney but not in heart, brain, liver, spleen, embryo, lung, thymus, ovary nor testis.

The protein resides in the cell membrane. The protein localises to the endoplasmic reticulum membrane. It catalyses the reaction taurocholate(out) = taurocholate(in). The enzyme catalyses tauroursodeoxycholate(out) = tauroursodeoxycholate(in). It carries out the reaction glycoursodeoxycholate(out) = glycoursodeoxycholate(in). The catalysed reaction is glycocholate(out) = glycocholate(in). It catalyses the reaction taurochenodeoxycholate(out) = taurochenodeoxycholate(in). The enzyme catalyses glycochenodeoxycholate(out) = glycochenodeoxycholate(in). It carries out the reaction taurodeoxycholate(out) = taurodeoxycholate(in). The catalysed reaction is glycodeoxycholate(out) = glycodeoxycholate(in). It catalyses the reaction prostaglandin E2(out) = prostaglandin E2(in). The enzyme catalyses estrone 3-sulfate(out) = estrone 3-sulfate(in). It carries out the reaction dehydroepiandrosterone 3-sulfate(out) = dehydroepiandrosterone 3-sulfate(in). Functionally, essential component of the Ost-alpha/Ost-beta complex, a heterodimer that acts as the intestinal basolateral transporter responsible for bile acid export from enterocytes into portal blood. Efficiently transports the major species of bile acids (taurocholate). Taurine conjugates are transported more efficiently across the basolateral membrane than glycine-conjugated bile acids. Can also transport steroids such as estrone 3-sulfate and dehydroepiandrosterone 3-sulfate, therefore playing a role in the enterohepatic circulation of sterols. Able to transport eicosanoids such as prostaglandin E2. The chain is Organic solute transporter subunit alpha (Slc51a) from Mus musculus (Mouse).